The chain runs to 1215 residues: Zinc finger SWIM domain-containing protein 6 (1215 aa).

Disordered regions lie at residues 1–46 (MAER…RPGP) and 133–161 (AAGG…SPAA). Gly residues-rich tracts occupy residues 18 to 38 (PGGG…GGGY) and 133 to 155 (AAGG…GGGS). Residues 246 to 283 (CNVAISFDRCKITSVTCSCGNKDIFYCAHVVALSLYRI) form an SWIM-type zinc finger.

Its function is as follows. involved in nervous system development, important for striatal morphology and motor regulation. The polypeptide is Zinc finger SWIM domain-containing protein 6 (Homo sapiens (Human)).